The sequence spans 473 residues: GTPase Der (473 aa).

EngA-type G domains lie at 5 to 170 (PVVA…PEDV) and 178 to 351 (LKLA…ASSM). Residues 11-18 (GRPNVGKS), 58-62 (DTGGI), 123-126 (NKID), 184-191 (GRPNVGKS), 231-235 (DTAGV), and 296-299 (NKWD) contribute to the GTP site. Residues 352–436 (FKVSTNRLTQ…PLKVEFKLNT (85 aa)) enclose the KH-like domain. Positions 438–473 (PYAGKKTTSSKKLRPGVSEARQKRRNMKYKKGSHKK) are disordered. Over residues 459–473 (QKRRNMKYKKGSHKK) the composition is skewed to basic residues.

The protein belongs to the TRAFAC class TrmE-Era-EngA-EngB-Septin-like GTPase superfamily. EngA (Der) GTPase family. Associates with the 50S ribosomal subunit.

Its function is as follows. GTPase that plays an essential role in the late steps of ribosome biogenesis. In Psychrobacter sp. (strain PRwf-1), this protein is GTPase Der.